We begin with the raw amino-acid sequence, 82 residues long: MRIMARIGVENSLTDVQQALQQQGHEVVTLNSEQDAQGCDCCVVTGQDSNVMGIADTSIKGSVITAHGLTTDEICQQVESRT.

The protein belongs to the UPF0180 family.

This Bacillus cereus (strain ATCC 14579 / DSM 31 / CCUG 7414 / JCM 2152 / NBRC 15305 / NCIMB 9373 / NCTC 2599 / NRRL B-3711) protein is UPF0180 protein BC_1394.